Here is a 64-residue protein sequence, read N- to C-terminus: Large ribosomal subunit protein bL35 (64 aa).

It belongs to the bacterial ribosomal protein bL35 family.

This chain is Large ribosomal subunit protein bL35, found in Shewanella oneidensis (strain ATCC 700550 / JCM 31522 / CIP 106686 / LMG 19005 / NCIMB 14063 / MR-1).